The following is a 1171-amino-acid chain: MSTVTFFNPYLCGPRKPRAPSAGEGGAEGAAAARARAASAPFLQIVPRGCLYDGERGLLKHNCALAPRMFFRDRPYVLSKDLVWPTLPPPAVPASTTERAPRAPAPSADLLFHMYDQAETVVSADSKELIHPGYRHRITPCGVVLRLFGRTADGASLCVNVFGQDAYFYCRYGDAQSLHDRLYRLSDTLELAPVFHVRVRRVQRCSIYGYGTRPFADLYLVACGNWHVLKKMGQCLLDEGVEVFEVGVSPLTRFLLDKKIPSFGWCRLRRWHARPAHGRLSTAELEVDCEVADVRGVDDVAWPLYRCLSFDIECLSGGGAFPVAENLDDVVIQISCVCYPVGGTEEQRAAFPVAERHLFTLGPCAPIPGVLVYEFPSEFELLCGFFTFFGRYAPEFVTGYNINNFDWRYLLTRAERVYRWPVAEYTRLRFGGRFCAYVPGGGGRQPGFRTAQTKVLITGTVVLDLYPVCMAKVSAPDYKLNTVCELYLGRQKEDLSYKELPRAFLSGDAGRARVGRYCVQDAVLVKELFEKLNYHYEAAAVARLARISLRKVIFEGQQIRIYTCLLEEAAARQMVVPTFRSGAQRGAATGAGGGGGEETTYQGATVFEPTVGYHHAPVAVFDFASLYPSIIMAHNLCYSTWLRDDPGTPARPPETPARPPETPAAGPSGAAHAGGVPGATFRTPFRTPAGVPAAAAGGVGAGPPGGGAVSSASVGGRAAVSPSETPAEREPEPAPEDVFVVHVGQGVSYRFVRENVRASILSELLRRWLAQRRAVREAMRECEDETRRLLLDKEQLALKVTCNAFYGFTGFSQGMLPCLPVAASITTIGRDMLSRTSAYIEAHFAEPAFLARFFEPGDLPRADEPPPTVRVIYGDTDSVFVRFGGVRAGAIVARGEDLAAAVTEALFTEPVKLEFEKLFVALMMICKKRYIGRVFGSDALVMKGVDLVRKTACRFVKTVVRDVVELVFRDAAVAEAATRMSELTLEEMRRVGVPAGFHVLLQRLARARDDLFSGRVETAALVLSSVLSQDVSRYKQLNLPHLAVIRRLAARSEELPSVGDRVSYVLTAGPPDGRANAPNYELAEDPDYVAAHRVPIHAAKYFEQVVKAVTNTLYPVFPRGVVRRDRFLADLVPKRVYLGDEFKRHARPVEEEVCESERGGSGLLSSLDSSR.

Disordered regions lie at residues 647–687 (GTPA…PFRT), 704–735 (PGGG…EPAP), and 1149–1171 (VEEE…DSSR). The segment covering 649–662 (PARPPETPARPPET) has biased composition (pro residues). 2 stretches are compositionally biased toward low complexity: residues 663 to 674 (PAAGPSGAAHAG) and 709 to 725 (VSSA…PSET). Positions 1149–1158 (VEEEVCESER) are enriched in basic and acidic residues.

Belongs to the DNA polymerase type-B family.

The protein resides in the host nucleus. The catalysed reaction is DNA(n) + a 2'-deoxyribonucleoside 5'-triphosphate = DNA(n+1) + diphosphate. The protein is DNA polymerase catalytic subunit (DPOL) of Tupaia belangeri (Common tree shrew).